Here is a 291-residue protein sequence, read N- to C-terminus: MTVPDNDPEQLRCVAESLATEAAAFVRCRRAEVFGTDLGAAGGGAVRAKSTPTDPVTVVDTETERLLRDRLAQLRPGDSILGEEGGGPADLTATPADTVTWVLDPIDGTVNFVYGIPAYAVSVAAQVDGVSVAGAVAEVVAGRVHSAASGLGAHVTDEYGVQVLRCSAVDDLSMALLGTGFAYSVVRRAAQAALLAQMLPVVRDVRRIGSAALDLCMVAAGQLDAYYEHEVQVWDCAAGALIAAEAGACVQLPKRNGPVGGAGLVVAAAPGIADALLAALQRFNGLAPILD.

Residues glutamate 83, aspartate 104, isoleucine 106, and aspartate 107 each coordinate Mg(2+). Glutamate 83 serves as a coordination point for substrate. Residues 106–109, arginine 206, and aspartate 235 each bind substrate; that span reads IDGT. Residue aspartate 235 participates in Mg(2+) binding.

It belongs to the inositol monophosphatase superfamily. Requires Mg(2+) as cofactor.

It carries out the reaction a myo-inositol phosphate + H2O = myo-inositol + phosphate. The chain is Inositol-1-monophosphatase (suhB) from Mycobacterium leprae (strain TN).